The following is a 359-amino-acid chain: sn-1 linoleoyl-lipid 6-desaturase (359 aa).

Helical transmembrane passes span 45–65 and 69–89; these read LIIV…PVIF and LLGC…VGHD. Positions 88–92 match the Histidine box-1 motif; sequence HDANH. The short motif at 123–128 is the Histidine box-2 element; sequence HNYLHH. The next 3 helical transmembrane spans lie at 165-185, 206-226, and 231-251; these read IWGL…YLVL, LLGI…ALGF, and VLIG…TIFM. A Histidine box-3 motif is present at residues 306–310; that stretch reads HHLFP.

The protein belongs to the fatty acid desaturase type 2 family. The cofactor is Fe(2+).

The protein resides in the membrane. The catalysed reaction is a 1-[(9Z,12Z)-octadecdienoyl]-2-acyl-glycerolipid + 2 reduced [2Fe-2S]-[ferredoxin] + O2 + 2 H(+) = a 1-[(6Z,9Z,12Z)-octadectrienoyl]-2-acyl-glycerolipid + 2 oxidized [2Fe-2S]-[ferredoxin] + 2 H2O. Its pathway is lipid metabolism; polyunsaturated fatty acid biosynthesis. In terms of biological role, desaturase involved in fatty acid biosynthesis. Introduces a double bond at carbon 6 of linoleoyl group (18:2) attached to the sn-1 position of the glycerol moiety of membrane glycerolipids, leading to the formation of gamma-linolenic acid (GLA). The polypeptide is sn-1 linoleoyl-lipid 6-desaturase (Synechocystis sp. (strain ATCC 27184 / PCC 6803 / Kazusa)).